Reading from the N-terminus, the 233-residue chain is Ribonuclease HII (233 aa).

Residues 21–211 (KIIAGVDEVG…LDALPQWRHL (191 aa)) enclose the RNase H type-2 domain. A divalent metal cation is bound by residues D27, E28, and D119.

The protein belongs to the RNase HII family. Requires Mn(2+) as cofactor. Mg(2+) is required as a cofactor.

The protein localises to the cytoplasm. It catalyses the reaction Endonucleolytic cleavage to 5'-phosphomonoester.. Its function is as follows. Endonuclease that specifically degrades the RNA of RNA-DNA hybrids. The chain is Ribonuclease HII (rnhB) from Streptomyces coelicolor (strain ATCC BAA-471 / A3(2) / M145).